The following is a 142-amino-acid chain: E1B protein, small T-antigen (142 aa).

It belongs to the adenoviridae E1B 19 kDa protein family.

It localises to the host cell membrane. The protein resides in the host nucleus envelope. Its subcellular location is the host nucleus lamina. In terms of biological role, putative adenovirus Bcl-2 homolog that inhibits apoptosis induced by TNF or FAS pathways, as well as p53-mediated apoptosis. Without E1B 19K function, virus production is compromised because of premature death of host cell. Interacts with Bax protein in cell lysates. The protein is E1B protein, small T-antigen of Homo sapiens (Human).